The sequence spans 535 residues: Methylmalonate-semialdehyde/malonate-semialdehyde dehydrogenase [acylating], mitochondrial (535 aa).

The transit peptide at 1-32 (MAAAVAAAAAMRSRILQVSSKVNATWYPASSF) directs the protein to the mitochondrion. Residues Lys-47, Lys-52, Lys-55, and Lys-76 each carry the N6-acetyllysine; alternate modification. N6-succinyllysine; alternate is present on residues Lys-47, Lys-52, Lys-55, and Lys-76. Lys-87 is subject to N6-acetyllysine. 2 positions are modified to N6-acetyllysine; alternate: Lys-117 and Lys-129. N6-succinyllysine; alternate occurs at positions 117 and 129. The NAD(+) site is built by Ala-183, Phe-185, Lys-209, Glu-212, Arg-213, and Ser-262. At Ser-262 the chain carries Phosphoserine. Lys-298 is subject to N6-acetyllysine. The active-site Nucleophile is Cys-317. 2 positions are modified to N6-acetyllysine: Lys-330 and Lys-331. Residues Lys-364 and Lys-376 each carry the N6-acetyllysine; alternate modification. N6-succinyllysine; alternate is present on residues Lys-364 and Lys-376. Ser-380 bears the Phosphoserine mark. The residue at position 391 (Lys-391) is an N6-succinyllysine. Residue Glu-417 coordinates NAD(+). An N6-acetyllysine modification is found at Lys-500. Lys-517 is modified (N6-succinyllysine).

The protein belongs to the aldehyde dehydrogenase family. Homotetramer. Acetylation of Lys-55; Lys-117 and Lys-331 is observed in liver mitochondria from fasted mice but not from fed mice.

The protein localises to the mitochondrion. It catalyses the reaction 3-oxopropanoate + NAD(+) + CoA + H2O = hydrogencarbonate + acetyl-CoA + NADH + H(+). The catalysed reaction is 2-methyl-3-oxopropanoate + NAD(+) + CoA + H2O = propanoyl-CoA + hydrogencarbonate + NADH + H(+). The enzyme catalyses (R)-2-methyl-3-oxopropanoate + NAD(+) + CoA + H2O = propanoyl-CoA + hydrogencarbonate + NADH + H(+). It carries out the reaction (S)-2-methyl-3-oxopropanoate + NAD(+) + CoA + H2O = propanoyl-CoA + hydrogencarbonate + NADH + H(+). In terms of biological role, malonate and methylmalonate semialdehyde dehydrogenase involved in the catabolism of valine, thymine, and compounds catabolized by way of beta-alanine, including uracil and cytidine. This Mus musculus (Mouse) protein is Methylmalonate-semialdehyde/malonate-semialdehyde dehydrogenase [acylating], mitochondrial.